Consider the following 214-residue polypeptide: Phosphoenolpyruvate guanylyltransferase (214 aa).

The phosphoenolpyruvate site is built by Thr-148, Gly-163, and Ser-166.

It belongs to the CofC family.

It catalyses the reaction phosphoenolpyruvate + GTP + H(+) = enolpyruvoyl-2-diphospho-5'-guanosine + diphosphate. Its pathway is cofactor biosynthesis; coenzyme F420 biosynthesis. Guanylyltransferase that catalyzes the activation of phosphoenolpyruvate (PEP) as enolpyruvoyl-2-diphospho-5'-guanosine, via the condensation of PEP with GTP. It is involved in the biosynthesis of coenzyme F420, a hydride carrier cofactor. The chain is Phosphoenolpyruvate guanylyltransferase from Mycobacterium tuberculosis (strain KZN 1435 / MDR).